Here is a 191-residue protein sequence, read N- to C-terminus: Probable protein adenylyltransferase HI_0977 (191 aa).

Residues 37–162 (GSTKGLQQIH…NDLEIRFLLQ (126 aa)) form the Fido domain. ATP contacts are provided by residues 67-68 (KG), 112-114 (GNG), arginine 118, and glutamine 145.

It belongs to the fic family.

The catalysed reaction is L-tyrosyl-[protein] + ATP = O-(5'-adenylyl)-L-tyrosyl-[protein] + diphosphate. It catalyses the reaction L-threonyl-[protein] + ATP = 3-O-(5'-adenylyl)-L-threonyl-[protein] + diphosphate. In terms of biological role, probable adenylyltransferase that mediates the addition of adenosine 5'-monophosphate (AMP) to specific residues of target proteins. The chain is Probable protein adenylyltransferase HI_0977 from Haemophilus influenzae (strain ATCC 51907 / DSM 11121 / KW20 / Rd).